Reading from the N-terminus, the 340-residue chain is Organic solute transporter subunit alpha (340 aa).

Topologically, residues 1–52 are extracellular; it reads MEPDRTQIRLDPRYTADLLEILKTNYSVPSACFSYPPTAAQLLRALGPVDIS. Asn25 is a glycosylation site (N-linked (GlcNAc...) asparagine). The chain crosses the membrane as a helical span at residues 53–73; it reads LMVIMTLFVLGSIAIFLEAAV. Over 74–87 the chain is Cytoplasmic; it reads YLHKNTRCPIKRKT. Residues 88-108 form a helical membrane-spanning segment; the sequence is LIWCSSSPTIVSAFSCFGLWI. Residues 109 to 110 are Extracellular-facing; it reads PR. The helical transmembrane segment at 111-131 threads the bilayer; sequence ALTLVEMAITTFYSMCFYLLM. Over 132 to 186 the chain is Cytoplasmic; that stretch reads QAMVEGFGGKEAVLRTLKDTPVMIHTGPCCCCCPCCPRIKITRKRLQLLLLGPIQ. The helical transmembrane segment at 187-207 threads the bilayer; it reads YAFFKISLTLVGLFLIPDGIF. The Extracellular portion of the chain corresponds to 208 to 219; it reads DPSDISEGSTAL. The chain crosses the membrane as a helical span at residues 220-240; that stretch reads WINTFLGVSTLSALWTIGIIF. The Cytoplasmic portion of the chain corresponds to 241–255; it reads RQARLHLGEQNIGAK. The helical transmembrane segment at 256 to 276 threads the bilayer; it reads FVLFQALLILSALQPSIFSVL. At 277–295 the chain is on the extracellular side; it reads ASGGQIACSPPFSSKIRSQ. Residues 296-316 traverse the membrane as a helical segment; the sequence is VMNCHLLILESFLITVLTRIY. Topologically, residues 317–340 are cytoplasmic; sequence YRRKDDKLGYEPFSSPDQDLNLKA. A Phosphoserine modification is found at Ser330.

This sequence belongs to the OST-alpha family. In terms of assembly, interacts with SLC51B. The Ost-alpha/Ost-beta complex is a heterodimer composed of alpha (SLC51A) and beta (SLC51B) subunit.

Its subcellular location is the cell membrane. The protein localises to the endoplasmic reticulum membrane. The enzyme catalyses taurocholate(out) = taurocholate(in). The catalysed reaction is estrone 3-sulfate(out) = estrone 3-sulfate(in). It catalyses the reaction dehydroepiandrosterone 3-sulfate(out) = dehydroepiandrosterone 3-sulfate(in). It carries out the reaction tauroursodeoxycholate(out) = tauroursodeoxycholate(in). The enzyme catalyses glycoursodeoxycholate(out) = glycoursodeoxycholate(in). The catalysed reaction is glycocholate(out) = glycocholate(in). It catalyses the reaction taurochenodeoxycholate(out) = taurochenodeoxycholate(in). It carries out the reaction glycochenodeoxycholate(out) = glycochenodeoxycholate(in). The enzyme catalyses taurodeoxycholate(out) = taurodeoxycholate(in). The catalysed reaction is glycodeoxycholate(out) = glycodeoxycholate(in). It catalyses the reaction prostaglandin E2(out) = prostaglandin E2(in). Its function is as follows. Essential component of the Ost-alpha/Ost-beta complex, a heterodimer that acts as the intestinal basolateral transporter responsible for bile acid export from enterocytes into portal blood. Efficiently transports the major species of bile acids (taurocholate). Taurine conjugates are transported more efficiently across the basolateral membrane than glycine-conjugated bile acids. Can also transport steroids such as estrone 3-sulfate and dehydroepiandrosterone 3-sulfate, therefore playing a role in the enterohepatic circulation of sterols. Able to transport eicosanoids such as prostaglandin E2. This chain is Organic solute transporter subunit alpha (SLC51A), found in Bos taurus (Bovine).